The chain runs to 174 residues: Large ribosomal subunit protein uL10 (174 aa).

This sequence belongs to the universal ribosomal protein uL10 family. In terms of assembly, part of the ribosomal stalk of the 50S ribosomal subunit. The N-terminus interacts with L11 and the large rRNA to form the base of the stalk. The C-terminus forms an elongated spine to which L12 dimers bind in a sequential fashion forming a multimeric L10(L12)X complex.

In terms of biological role, forms part of the ribosomal stalk, playing a central role in the interaction of the ribosome with GTP-bound translation factors. The chain is Large ribosomal subunit protein uL10 from Anaeromyxobacter sp. (strain Fw109-5).